A 128-amino-acid polypeptide reads, in one-letter code: MFQAAGAAQATPSHEAKGGGSSSTVQRSKSFSLRAQVKETCAACQKTVYPMERLVADKLIFHSSCFCCKHCHTKLSLGSYAALHGEFYCKPHFQQLFKSKGNYDEGFGRKQHKELWAHKEVDPGTKTA.

An N-acetylmethionine modification is found at M1. The interval 1 to 25 (MFQAAGAAQATPSHEAKGGGSSSTV) is disordered. The LIM zinc-binding domain maps to 39–99 (ETCAACQKTV…KPHFQQLFKS (61 aa)). Residues C41, C44, H62, C65, C68, C71, C89, and H92 each coordinate Zn(2+).

In terms of assembly, interacts with ILK.

It localises to the cytoplasm. The protein localises to the nucleus. Functionally, acts as an activator of the protein-kinase ILK, thereby regulating cell motility. This chain is LIM domain-containing protein 2 (LIMD2), found in Bos taurus (Bovine).